The primary structure comprises 558 residues: Pyrethroid hydrolase Ces2a (558 aa).

An N-terminal signal peptide occupies residues 1–26; it reads MPLARLPGWLCVVACGLLLLLQHVHG. C95 and C122 are oxidised to a cystine. Position 209 is an N6-succinyllysine (K209). The active-site Acyl-ester intermediate is the S227. Residue N275 is glycosylated (N-linked (GlcNAc...) asparagine). A disulfide bridge links C279 with C290. Position 296 is an N6-succinyllysine (K296). E344 (charge relay system) is an active-site residue. N-linked (GlcNAc...) asparagine glycosylation occurs at N361. H456 serves as the catalytic Charge relay system.

It belongs to the type-B carboxylesterase/lipase family.

Its subcellular location is the microsome. The enzyme catalyses (-)-trans-permethrin + H2O = (3-phenoxyphenyl)methanol + (1S,3R)-3-(2,2-dichlorovinyl)-2,2-dimethylcyclopropanecarboxylate + H(+). The catalysed reaction is all-trans-retinyl hexadecanoate + H2O = all-trans-retinol + hexadecanoate + H(+). Carboxylesterases that catalyzes the hydrolysis of pyrethroids pesticides. Hydrolyzes permethrin faster than cypermethrin. Hydrolyzes retinyl esters. This chain is Pyrethroid hydrolase Ces2a, found in Mus musculus (Mouse).